The primary structure comprises 103 residues: Co-chaperonin GroES (103 aa).

It belongs to the GroES chaperonin family. In terms of assembly, heptamer of 7 subunits arranged in a ring. Interacts with the chaperonin GroEL.

The protein localises to the cytoplasm. Its function is as follows. Together with the chaperonin GroEL, plays an essential role in assisting protein folding. The GroEL-GroES system forms a nano-cage that allows encapsulation of the non-native substrate proteins and provides a physical environment optimized to promote and accelerate protein folding. GroES binds to the apical surface of the GroEL ring, thereby capping the opening of the GroEL channel. In Synechococcus sp. (strain JA-3-3Ab) (Cyanobacteria bacterium Yellowstone A-Prime), this protein is Co-chaperonin GroES.